A 304-amino-acid chain; its full sequence is Homoserine O-acetyltransferase (304 aa).

The Acyl-thioester intermediate role is filled by Cys142. Substrate-binding residues include Lys163 and Ser191. The active-site Proton acceptor is His234. Glu236 is an active-site residue. A substrate-binding site is contributed by Arg248.

The protein belongs to the MetA family.

The protein resides in the cytoplasm. The catalysed reaction is L-homoserine + acetyl-CoA = O-acetyl-L-homoserine + CoA. Its pathway is amino-acid biosynthesis; L-methionine biosynthesis via de novo pathway; O-acetyl-L-homoserine from L-homoserine: step 1/1. Functionally, transfers an acetyl group from acetyl-CoA to L-homoserine, forming acetyl-L-homoserine. The chain is Homoserine O-acetyltransferase from Thermotoga neapolitana (strain ATCC 49049 / DSM 4359 / NBRC 107923 / NS-E).